An 873-amino-acid polypeptide reads, in one-letter code: Sine oculis-binding protein homolog (873 aa).

The span at Met1–Lys14 shows a compositional bias: basic and acidic residues. The interval Met1 to Glu26 is disordered. 2 consecutive FCS-type zinc fingers follow at residues Asp142 to Ala180 and Phe216 to Asn256. Disordered regions lie at residues Arg308 to Asn339, Arg413 to Pro484, and Lys550 to Leu646. Residues Ala318–Asn339 show a composition bias toward polar residues. Residues His417–Gly433 are compositionally biased toward low complexity. Residues Ile460–Pro484 are compositionally biased toward pro residues. The segment covering Glu614–Arg625 has biased composition (basic and acidic residues). The short motif at Val620 to Thr624 is the SUMO interaction motif 1 (SIM); mediates the binding to polysumoylated substrates element. Residue Ser629 is modified to Phosphoserine. The SUMO interaction motif 2 (SIM); mediates the binding to polysumoylated substrates motif lies at Val653 to Thr657. A Glycyl lysine isopeptide (Lys-Gly) (interchain with G-Cter in SUMO2) cross-link involves residue Lys677. Ser699 carries the post-translational modification Phosphoserine. The interval Ala730 to Val771 is disordered. The segment covering Glu739–Pro754 has biased composition (pro residues).

Belongs to the SOBP family. As to quaternary structure, interacts (via SIM domains) with SUMO1 and SUMO2.

In terms of biological role, implicated in development of the cochlea. The chain is Sine oculis-binding protein homolog from Homo sapiens (Human).